A 407-amino-acid polypeptide reads, in one-letter code: E3 ubiquitin-protein ligase TRIM13 (407 aa).

The RING-type zinc-finger motif lies at 10-58; sequence CPICCSLFDDPRVLPCSHNFCKKCLEGLLEGNVRNSLWRPSPFKCPTCR. The B box-type zinc-finger motif lies at 89-131; the sequence is PKMPVCKGHLGQPLNIFCVTDMQLICGICATRGEHTKHVFSSI. Zn(2+) is bound by residues Cys-94, His-97, Cys-117, and His-123. Residues 172 to 200 adopt a coiled-coil conformation; that stretch reads LQLLTKDSDKVKEFFEKLQHTLDQKKNEI. A helical membrane pass occupies residues 316–336; it reads LLLMMVVLLGLLIFFGPTVFL.

This sequence belongs to the TRIM/RBCC family. Interacts (via C-terminal domain) with VCP. Interacts with AKT1; the interaction ubiquitinates AKT1 and leads to its proteasomal degradation. Interacts with MDM2; the interaction ubiquitinates AKT1 and leads to its proteasomal degradation. Interacts with p62/SQSTM1. Interacts with TRAF6. Interacts with IKBKG/NEMO. Auto-ubiquitinated; requires the RING-type zinc finger. Auto-polyubiquitination leads to proteasomal degradation.

It localises to the endoplasmic reticulum membrane. It catalyses the reaction S-ubiquitinyl-[E2 ubiquitin-conjugating enzyme]-L-cysteine + [acceptor protein]-L-lysine = [E2 ubiquitin-conjugating enzyme]-L-cysteine + N(6)-ubiquitinyl-[acceptor protein]-L-lysine.. The protein operates within protein modification; protein ubiquitination. In terms of biological role, endoplasmic reticulum (ER) membrane anchored E3 ligase involved in the retrotranslocation and turnover of membrane and secretory proteins from the ER through a set of processes named ER-associated degradation (ERAD). This process acts on misfolded proteins as well as in the regulated degradation of correctly folded proteins. Enhances ionizing radiation-induced p53/TP53 stability and apoptosis via ubiquitinating MDM2 and AKT1 and decreasing AKT1 kinase activity through MDM2 and AKT1 proteasomal degradation. Regulates ER stress-induced autophagy, and may act as a tumor suppressor. Also plays a role in innate immune response by stimulating NF-kappa-B activity in the TLR2 signaling pathway. Ubiquitinates TRAF6 via the 'Lys-29'-linked polyubiquitination chain resulting in NF-kappa-B activation. Participates as well in T-cell receptor-mediated NF-kappa-B activation. In the presence of TNF, modulates the IKK complex by regulating IKBKG/NEMO ubiquitination leading to the repression of NF-kappa-B. This is E3 ubiquitin-protein ligase TRIM13 (Trim13) from Mus musculus (Mouse).